Consider the following 474-residue polypeptide: Replication factor C large subunit (474 aa).

ATP is bound at residue 45–52; sequence GPPGCGKT. A compositionally biased stretch (basic and acidic residues) spans 415–468; it reads DKKTNNKKGKENKTKNTTKKIKEIKETPKKEEVKEPKKQIEKQKSEKKEPKKQM. The tract at residues 415 to 474 is disordered; it reads DKKTNNKKGKENKTKNTTKKIKEIKETPKKEEVKEPKKQIEKQKSEKKEPKKQMTLESFF.

This sequence belongs to the activator 1 small subunits family. RfcL subfamily. Heteromultimer composed of small subunits (RfcS) and large subunits (RfcL).

In terms of biological role, part of the RFC clamp loader complex which loads the PCNA sliding clamp onto DNA. The polypeptide is Replication factor C large subunit (Methanococcus aeolicus (strain ATCC BAA-1280 / DSM 17508 / OCM 812 / Nankai-3)).